The primary structure comprises 396 residues: Elongation factor Tu 1 (396 aa).

One can recognise a tr-type G domain in the interval 10-206; it reads KPHVNIGTIG…AVDEYIPTPE (197 aa). Positions 19–26 are G1; the sequence is GHVDHGKT. Residue 19–26 coordinates GTP; that stretch reads GHVDHGKT. Thr-26 provides a ligand contact to Mg(2+). A G2 region spans residues 60 to 64; that stretch reads GITIN. Residues 81 to 84 are G3; sequence DCPG. Residues 81-85 and 136-139 each bind GTP; these read DCPGH and NKVD. The tract at residues 136 to 139 is G4; the sequence is NKVD. Positions 174-176 are G5; sequence SAL.

It belongs to the TRAFAC class translation factor GTPase superfamily. Classic translation factor GTPase family. EF-Tu/EF-1A subfamily. In terms of assembly, monomer.

It is found in the cytoplasm. It catalyses the reaction GTP + H2O = GDP + phosphate + H(+). Its function is as follows. GTP hydrolase that promotes the GTP-dependent binding of aminoacyl-tRNA to the A-site of ribosomes during protein biosynthesis. The sequence is that of Elongation factor Tu 1 from Hyphomonas neptunium (strain ATCC 15444).